Reading from the N-terminus, the 376-residue chain is Histidinol-phosphate aminotransferase (376 aa).

The tract at residues 1–21 (MQPRDLSAHEPYVPGRGTKEV) is disordered. Lys222 bears the N6-(pyridoxal phosphate)lysine mark.

It belongs to the class-II pyridoxal-phosphate-dependent aminotransferase family. Histidinol-phosphate aminotransferase subfamily. Pyridoxal 5'-phosphate is required as a cofactor.

The enzyme catalyses L-histidinol phosphate + 2-oxoglutarate = 3-(imidazol-4-yl)-2-oxopropyl phosphate + L-glutamate. Its pathway is amino-acid biosynthesis; L-histidine biosynthesis; L-histidine from 5-phospho-alpha-D-ribose 1-diphosphate: step 7/9. This Haloquadratum walsbyi (strain DSM 16790 / HBSQ001) protein is Histidinol-phosphate aminotransferase.